We begin with the raw amino-acid sequence, 367 residues long: Cobalt-precorrin-5B C(1)-methyltransferase (367 aa).

This sequence belongs to the CbiD family.

The catalysed reaction is Co-precorrin-5B + S-adenosyl-L-methionine = Co-precorrin-6A + S-adenosyl-L-homocysteine. It functions in the pathway cofactor biosynthesis; adenosylcobalamin biosynthesis; cob(II)yrinate a,c-diamide from sirohydrochlorin (anaerobic route): step 6/10. Functionally, catalyzes the methylation of C-1 in cobalt-precorrin-5B to form cobalt-precorrin-6A. This Leptospira interrogans serogroup Icterohaemorrhagiae serovar Lai (strain 56601) protein is Cobalt-precorrin-5B C(1)-methyltransferase.